The following is a 423-amino-acid chain: Gamma-glutamyl phosphate reductase (423 aa).

It belongs to the gamma-glutamyl phosphate reductase family.

It localises to the cytoplasm. It catalyses the reaction L-glutamate 5-semialdehyde + phosphate + NADP(+) = L-glutamyl 5-phosphate + NADPH + H(+). The protein operates within amino-acid biosynthesis; L-proline biosynthesis; L-glutamate 5-semialdehyde from L-glutamate: step 2/2. Its function is as follows. Catalyzes the NADPH-dependent reduction of L-glutamate 5-phosphate into L-glutamate 5-semialdehyde and phosphate. The product spontaneously undergoes cyclization to form 1-pyrroline-5-carboxylate. The polypeptide is Gamma-glutamyl phosphate reductase (Paracoccus denitrificans (strain Pd 1222)).